Reading from the N-terminus, the 233-residue chain is Large ribosomal subunit protein uL1 (233 aa).

It belongs to the universal ribosomal protein uL1 family. In terms of assembly, part of the 50S ribosomal subunit.

Functionally, binds directly to 23S rRNA. The L1 stalk is quite mobile in the ribosome, and is involved in E site tRNA release. Its function is as follows. Protein L1 is also a translational repressor protein, it controls the translation of the L11 operon by binding to its mRNA. The chain is Large ribosomal subunit protein uL1 from Shewanella sediminis (strain HAW-EB3).